Consider the following 765-residue polypeptide: MSTKTSREIALERRKAMSDGGKKAALHSSSTKDRVRSSQDINSTGATSSNKKVLTSPSKSNIPANKIARKSTSSKLSSKELGIERRKAMSTHGKSAINSSDRTRTDVKSDIKVNKVISTEKPQALKDHNNNIKDNQVVKQNIKRRINQKRKPITNTSRDIVLARREAQSKHGKSASKQNTSAASLARRGDPDLSSREISQRVRELRSKTGSTSKQGNGKCRPCGPNKNGSKLNIADASWKVGKSETDSGQTVTGTQANRSLKTTGNEASTCRTVTGTQYMGAEVTGQFCQDKPKYKQPIRASVTTTTSGNKVTGNEVGRSEKVTGDEPGTCKNLTGTEYISANQSKKYCGEVIKKPSKVMQSITTDGLKVSGSLPGRSSLVTGDESGSGKQLTGDQYLGSEPSPKGKSFEKVGSYDTLNGNNVTGTGVGRSDYVTGNEYGSCKNLTGDEYIGSQQYEKFCGSTPKPEARKVGLSLSSKSNLISGTMTGRSKIVTGDEPGSCKVLTGTPYAGLDQINDNCNAEIADDMKSRATVNSGNNSNARLTGLQPGIGGVMTGATKGSCKNLTGTPYIGGDQFLSNCETPPNDASYANQEKSASNSWKEFSVNSPSREKYSAKNTEGVTGNRYEDSSKITGPFDMAEDKVTGTEQFRFEPNKNMTYKQKMKQEESQNIDIPTDKKEPSKITGEGQSAGNITGDDWDRGDKVTGTEGVSARKRNPSRAGFMGAMPPVDNKRNDETEKPDFLITGSSGNTRDGQLVTFSGGARG.

Residues Met-1–Lys-22 show a composition bias toward basic and acidic residues. 2 disordered regions span residues Met-1–Val-107 and Arg-165–Gly-229. Residues Met-1–Gln-215 are N-terminal domain. One copy of the N-repeat 1 repeat lies at Arg-7–Lys-22. A compositionally biased stretch (polar residues) spans Ser-38–Pro-63. Residues Ser-77–Lys-87 show a composition bias toward basic and acidic residues. 3 N-repeat repeats span residues Lys-79–Lys-94, Arg-158–Lys-173, and Arg-196–Ser-211. Over residues Arg-187–Ser-207 the composition is skewed to basic and acidic residues. The segment at Gly-216–Asp-586 is middle region. M-repeat repeat units follow at residues Lys-240–Cys-289, Arg-300–Cys-349, Lys-358–Tyr-397, Lys-411–Cys-460, Lys-470–Cys-519, and Arg-530–Cys-580. 2 disordered regions span residues Thr-306 to Pro-328 and Gly-367 to Gly-413. The C-terminal domain stretch occupies residues Tyr-589–Asn-734. C-repeat repeat units follow at residues Ser-604–Gln-648 and Lys-677–Ser-711. 2 disordered regions span residues Glu-611–Asp-637 and Asn-656–Gly-765. Residues Asp-730–Asp-741 are compositionally biased toward basic and acidic residues. The C-terminal peptide stretch occupies residues Asp-735–Gly-765.

Belongs to the CsoS2 family. As to quaternary structure, probably interacts with the carboxysome major shell protein CsoS1 via the N-terminal domain. A CsoS1-CsoS1D-CsoS2 complex can be isolated following expression in E.coli. Interacts via its N-terminal repeats with RuBisCO. In terms of processing, unlike H.neapolitanus and predictions for P.marinus strain MIT 9313, this protein is not thought to have ribosomal frameshifting.

The protein resides in the carboxysome. Functionally, required for alpha-carboxysome (Cb) assembly, mediates interaction between RuBisCO and the Cb shell. The protein is probably highly flexible. The C-terminal repeats act as the encapsulation signal to target proteins to the Cb; they are necessary and sufficient to target both CsoS2 and foreign proteins to the Cb. The N-terminal repeats of this protein bind simultaneously to both subunits of RuBisCO. Probably also interacts with the major shell proteins (CsoS1); that interaction would increase the local concentration of CsoS2 so that it can condense RuBisCO and full carboxysomes can be formed. There are estimated to be 163 CsoS2 proteins per carboxysome; unlike H.neapolitanus only 1 form is seen. The polypeptide is Carboxysome assembly protein CsoS2 (Prochlorococcus marinus subsp. pastoris (strain CCMP1986 / NIES-2087 / MED4)).